Consider the following 317-residue polypeptide: 2,3-dihydroxyphenylpropionate/2,3-dihydroxicinnamic acid 1,2-dioxygenase (317 aa).

Catalysis depends on His115, which acts as the Proton donor. The active-site Proton acceptor is the His179.

This sequence belongs to the LigB/MhpB extradiol dioxygenase family. In terms of assembly, homotetramer. Requires Fe(2+) as cofactor.

The catalysed reaction is 3-(2,3-dihydroxyphenyl)propanoate + O2 = (2Z,4E)-2-hydroxy-6-oxonona-2,4-dienedioate + H(+). It carries out the reaction (2E)-3-(2,3-dihydroxyphenyl)prop-2-enoate + O2 = (2Z,4E,7E)-2-hydroxy-6-oxonona-2,4,7-trienedioate + H(+). The protein operates within aromatic compound metabolism; 3-phenylpropanoate degradation. Its function is as follows. Catalyzes the non-heme iron(II)-dependent oxidative cleavage of 2,3-dihydroxyphenylpropionic acid and 2,3-dihydroxicinnamic acid into 2-hydroxy-6-ketononadienedioate and 2-hydroxy-6-ketononatrienedioate, respectively. This Photorhabdus laumondii subsp. laumondii (strain DSM 15139 / CIP 105565 / TT01) (Photorhabdus luminescens subsp. laumondii) protein is 2,3-dihydroxyphenylpropionate/2,3-dihydroxicinnamic acid 1,2-dioxygenase.